The primary structure comprises 753 residues: 5-methyltetrahydropteroyltriglutamate--homocysteine methyltransferase (753 aa).

5-methyltetrahydropteroyltri-L-glutamate-binding positions include 17–20 (RELK) and lysine 117. L-homocysteine-binding positions include 431-433 (IGS) and glutamate 484. Residues 431 to 433 (IGS) and glutamate 484 contribute to the L-methionine site. 5-methyltetrahydropteroyltri-L-glutamate is bound by residues 515–516 (RC) and tryptophan 561. Aspartate 599 is a binding site for L-homocysteine. Aspartate 599 provides a ligand contact to L-methionine. A 5-methyltetrahydropteroyltri-L-glutamate-binding site is contributed by glutamate 605. 3 residues coordinate Zn(2+): histidine 641, cysteine 643, and glutamate 665. Histidine 694 serves as the catalytic Proton donor. Cysteine 726 is a binding site for Zn(2+).

The protein belongs to the vitamin-B12 independent methionine synthase family. Requires Zn(2+) as cofactor.

The enzyme catalyses 5-methyltetrahydropteroyltri-L-glutamate + L-homocysteine = tetrahydropteroyltri-L-glutamate + L-methionine. It participates in amino-acid biosynthesis; L-methionine biosynthesis via de novo pathway; L-methionine from L-homocysteine (MetE route): step 1/1. In terms of biological role, catalyzes the transfer of a methyl group from 5-methyltetrahydrofolate to homocysteine resulting in methionine formation. The polypeptide is 5-methyltetrahydropteroyltriglutamate--homocysteine methyltransferase (Escherichia fergusonii (strain ATCC 35469 / DSM 13698 / CCUG 18766 / IAM 14443 / JCM 21226 / LMG 7866 / NBRC 102419 / NCTC 12128 / CDC 0568-73)).